The sequence spans 55 residues: Large ribosomal subunit protein bL33 (55 aa).

This sequence belongs to the bacterial ribosomal protein bL33 family.

The chain is Large ribosomal subunit protein bL33 from Brucella abortus (strain S19).